Here is a 185-residue protein sequence, read N- to C-terminus: Ribosome-recycling factor (185 aa).

It belongs to the RRF family.

It is found in the cytoplasm. Its function is as follows. Responsible for the release of ribosomes from messenger RNA at the termination of protein biosynthesis. May increase the efficiency of translation by recycling ribosomes from one round of translation to another. The sequence is that of Ribosome-recycling factor from Neorickettsia sennetsu (strain ATCC VR-367 / Miyayama) (Ehrlichia sennetsu).